A 337-amino-acid polypeptide reads, in one-letter code: MKVLVTGATSGLGRNAVEFLCQKGISVRATGRNEAMGKLLEKMGAEFVPADLTELVSSQAKVMLAGIDTLWHCSSFTSPWGTQQAFDLANVRATRRLGEWAVAWGVRNFIHISSPSLYFDYHHHRDIKEDFRPHRFANEFARSKAASEEVINMLSQANPQTRFTILRPQSLFGPHDKVFIPRLAHMMHHYGSILLPHGGSALVDMTYYENAVHAMWLASQEACDKLPSGRVYNITNGEHRTLRSIVQKLIDELNIDCRIRSVPYPMLDMIARSMERLGRKSAKEPPLTHYGVSKLNFDFTLDITRAQEELGYQPVITLDEGIEKTAAWLRDHGKLPR.

This sequence belongs to the NAD(P)-dependent epimerase/dehydratase family.

This is an uncharacterized protein from Escherichia coli (strain K12).